The primary structure comprises 779 residues: Phosphoribosylformylglycinamidine synthase subunit PurL (779 aa).

Histidine 52 is an active-site residue. ATP contacts are provided by tyrosine 55 and lysine 94. Glutamate 96 is a Mg(2+) binding site. Residues 97 to 100 and arginine 119 each bind substrate; that span reads SHNH. Histidine 98 functions as the Proton acceptor in the catalytic mechanism. Residue aspartate 120 participates in Mg(2+) binding. Residue glutamine 243 coordinates substrate. Aspartate 271 is a binding site for Mg(2+). A substrate-binding site is contributed by 315-317; the sequence is ESQ. Residues asparagine 523 and glycine 560 each contribute to the ATP site. Asparagine 561 lines the Mg(2+) pocket. Residue serine 563 participates in substrate binding.

It belongs to the FGAMS family. As to quaternary structure, monomer. Part of the FGAM synthase complex composed of 1 PurL, 1 PurQ and 2 PurS subunits.

It localises to the cytoplasm. It catalyses the reaction N(2)-formyl-N(1)-(5-phospho-beta-D-ribosyl)glycinamide + L-glutamine + ATP + H2O = 2-formamido-N(1)-(5-O-phospho-beta-D-ribosyl)acetamidine + L-glutamate + ADP + phosphate + H(+). It functions in the pathway purine metabolism; IMP biosynthesis via de novo pathway; 5-amino-1-(5-phospho-D-ribosyl)imidazole from N(2)-formyl-N(1)-(5-phospho-D-ribosyl)glycinamide: step 1/2. Part of the phosphoribosylformylglycinamidine synthase complex involved in the purines biosynthetic pathway. Catalyzes the ATP-dependent conversion of formylglycinamide ribonucleotide (FGAR) and glutamine to yield formylglycinamidine ribonucleotide (FGAM) and glutamate. The FGAM synthase complex is composed of three subunits. PurQ produces an ammonia molecule by converting glutamine to glutamate. PurL transfers the ammonia molecule to FGAR to form FGAM in an ATP-dependent manner. PurS interacts with PurQ and PurL and is thought to assist in the transfer of the ammonia molecule from PurQ to PurL. The protein is Phosphoribosylformylglycinamidine synthase subunit PurL of Prochlorococcus marinus subsp. pastoris (strain CCMP1986 / NIES-2087 / MED4).